The primary structure comprises 888 residues: Alanine--tRNA ligase (888 aa).

Zn(2+)-binding residues include H570, H574, C673, and H677.

Belongs to the class-II aminoacyl-tRNA synthetase family. Requires Zn(2+) as cofactor.

The protein localises to the cytoplasm. The catalysed reaction is tRNA(Ala) + L-alanine + ATP = L-alanyl-tRNA(Ala) + AMP + diphosphate. Functionally, catalyzes the attachment of alanine to tRNA(Ala) in a two-step reaction: alanine is first activated by ATP to form Ala-AMP and then transferred to the acceptor end of tRNA(Ala). Also edits incorrectly charged Ser-tRNA(Ala) and Gly-tRNA(Ala) via its editing domain. This is Alanine--tRNA ligase from Chlorobium phaeobacteroides (strain DSM 266 / SMG 266 / 2430).